A 608-amino-acid chain; its full sequence is Translation initiation factor RLI1 (608 aa).

4Fe-4S ferredoxin-type domains are found at residues 7–39 (RIAIVSADKCKPKKCRQECKRSCPVVKTGKLCI) and 46–75 (KIAFISEILCIGCGICVKKCPFDAIQIINL). ABC transporter domains are found at residues 70–320 (IQII…FLDG) and 345–568 (LQND…LKNL). An ATP-binding site is contributed by 110-117 (GTNGIGKS). Ser-349 is subject to Phosphoserine. Residue 385 to 392 (GENGTGKT) participates in ATP binding.

This sequence belongs to the ABC transporter superfamily. ABCE family. In terms of assembly, component of the multifactor complex (MFC) composed of at least RLI1, the eIF2 subunit SUI2, TIF5/eIF5, and the eIF3 subunits PRT1, HCR1, NIP1, RPG1, TIF34 and TIF35. The complex associates with pre-initiation complexes. Interacts with the complex YAE1:LTO1; the complex bridges the interaction between the CIA complex and RLI1.

The protein resides in the cytoplasm. Its subcellular location is the nucleus. Its function is as follows. Component of the multifactor complex (MFC) involved in translation initiation. Required for the binding of MFC to the 40S ribosome. Required for the processing and nuclear export of the 60S and 40S ribosomal subunits. This Saccharomyces cerevisiae (strain ATCC 204508 / S288c) (Baker's yeast) protein is Translation initiation factor RLI1 (RLI1).